Here is a 260-residue protein sequence, read N- to C-terminus: Circadian clock-controlled protein daywake (260 aa).

The first 25 residues, 1-25 (MQLTSASVCLLWMGLLSWVSHRIDA), serve as a signal peptide directing secretion.

This sequence belongs to the TO family.

In terms of biological role, component of the circadian clock or downstream effector of clock function. Required for suppressing daytime sleep (siesta) under ambient environmental temperatures. Part of a heat avoidance mechanism that modulates daytime sleep behavior under different environmental temperatures to minimize the risk of heat exposure. Under cooler ambient temperatures, suppresses daytime sleep (siesta) and thus allows for longer periods of daytime activity. This chain is Circadian clock-controlled protein daywake, found in Drosophila yakuba (Fruit fly).